We begin with the raw amino-acid sequence, 655 residues long: A-type voltage-gated potassium channel KCND3 (655 aa).

The Cytoplasmic portion of the chain corresponds to 1–182 (MAAGVAAWLP…FENPHTSTLA (182 aa)). Interaction with KCNIP1 stretches follow at residues 6-21 (AAWL…GWMP) and 70-78 (EKEFFFNED). Zn(2+)-binding residues include His104, Cys110, Cys131, and Cys132. Phosphoserine is present on Ser153. A helical membrane pass occupies residues 183–204 (LVFYYVTGFFIAVSVITNVVET). Residues 205-223 (VPCGTVPGSKELPCGERYS) lie on the Extracellular side of the membrane. A helical membrane pass occupies residues 224-246 (VAFFCLDTACVMIFTVEYLLRLF). The Cytoplasmic portion of the chain corresponds to 247-253 (AAPSRYR). Residues 254–277 (FIRSVMSIIDVVAIMPYYIGLVMT) form a helical membrane-spanning segment. The Extracellular portion of the chain corresponds to 278–283 (NNEDVS). Residues 284-306 (GAFVTLRVFRVFRIFKFSRHSQG) traverse the membrane as a helical; Voltage-sensor segment. At 307 to 318 (LRILGYTLKSCA) the chain is on the cytoplasmic side. The helical transmembrane segment at 319 to 343 (SELGFLLFSLTMAIIIFATVMFYAE) threads the bilayer. The Extracellular portion of the chain corresponds to 344 to 352 (KGSSASKFT). Residues 353–366 (SIPASFWYTIVTMT) constitute an intramembrane region (helical). Residues Thr367, Leu368, Gly369, and Tyr370 each contribute to the K(+) site. A Selectivity filter motif is present at residues 367–372 (TLGYGD). The stretch at 367–374 (TLGYGDMV) is an intramembrane region. The chain crosses the membrane as a helical span at residues 378–400 (IAGKIFGSICSLSGVLVIALPVP). Residues 401 to 655 (VIVSNFSRIY…TSNVVKVSVL (255 aa)) lie on the Cytoplasmic side of the membrane. Thr459 is modified (phosphothreonine). Residues 470–487 (SLIESQHHHLLHCLEKTT) are interaction with KCNIP1 and KCNIP2. A mediates dendritic targeting region spans residues 474–489 (SQHHHLLHCLEKTTGL). The segment at 523-565 (SSMQNYPSTRSPSLSSHSGLTTTCCSRRSKKTTHLPNSNLPAT) is disordered. A compositionally biased stretch (low complexity) spans 529–548 (PSTRSPSLSSHSGLTTTCCS). Ser569 carries the post-translational modification Phosphoserine; by CaMK2D. Ser585 bears the Phosphoserine mark. The disordered stretch occupies residues 616–647 (SIPTPPALTPEGESRPPPASPGPNTNIPSITS). Positions 637-647 (GPNTNIPSITS) are enriched in polar residues.

Belongs to the potassium channel family. D (Shal) (TC 1.A.1.2) subfamily. Kv4.3/KCND3 sub-subfamily. As to quaternary structure, homotetramer. Heterotetramer with KCND2. Associates with the regulatory subunits KCNIP3 and KCNIP4. Interacts with KCNE1, KCNE2, SCN1B and KCNAB1 and DLG1. Component of heteromultimeric potassium channels. Identified in potassium channel complexes containing KCND1, KCND2, KCND3, KCNIP1, KCNIP2, KCNIP3, KCNIP4, DPP6 and DPP10. Interacts with KCNIP1; each KCNIP1 monomer interacts with two adjacent KCND3 subunits, through both the N-terminal inactivation ball of a KCND3 subunit and a C-terminal helix from the adjacent KCND3 subunit, clamping them together; this interaction stabilizes the tetrameric form and modulates the channel gating kinetics namely channel activation and inactivation kinetics and rate of recovery from inactivation. Interacts with DPP6; this interaction modulates the channel gating kinetics namely channel activation and inactivation kinetics and rate of recovery from inactivation. Interacts with KCNIP2; each KCNIP2 monomer interacts with two adjacent KCND3 subunits, through both the N-terminal inactivation ball of a KCND3 subunit and a C-terminal helix from the adjacent KCND3 subunit, clamping them together; this interaction modulates the channel gating kinetics. In terms of processing, regulated through phosphorylation at Ser-569 by CaMK2D. In terms of tissue distribution, highly expressed in brain, in particular in the retrosplenial cortex, medial habenula, anterior thalamus, hippocampus, cerebellum and lateral geniculate and superior colliculus. Highly expressed in heart atrium (at protein level) and throughout the ventricle wall, in lung and vas deferens.

It localises to the cell membrane. The protein localises to the sarcolemma. Its subcellular location is the cell projection. It is found in the dendrite. It catalyses the reaction K(+)(in) = K(+)(out). Its function is as follows. Pore-forming (alpha) subunit of voltage-gated A-type potassium channels that mediates transmembrane potassium transport in excitable membranes, in brain and heart. In cardiomyocytes, may generate the transient outward potassium current I(To). In neurons, may conduct the transient subthreshold somatodendritic A-type potassium current (ISA). Kinetics properties are characterized by fast activation at subthreshold membrane potentials, rapid inactivation, and quick recovery from inactivation. Channel properties are modulated by interactions with regulatory subunits. Interaction with the regulatory subunits KCNIP1 or KCNIP2 modulates the channel gating kinetics namely channel activation and inactivation kinetics and rate of recovery from inactivation. Likewise, interaction with DPP6 modulates the channel gating kinetics namely channel activation and inactivation kinetics. This is A-type voltage-gated potassium channel KCND3 from Rattus norvegicus (Rat).